The sequence spans 528 residues: MTAQQLWQRYLDWLYYDPSLEFYLDISRMGFDDAFVTSMQPKFQHAFAAMAELEAGAIANPDEQRMVGHYWLRDPELAPTPELQTQIRDTLAAIQDFALKVHSGVLRPPTGSRFTDILSIGIGGSALGPQFVSEALRPQAALLQIHFFDNTDPAGFDRVLADLGDRLASTLVIVISKSGGTPETRNGMLEVQSAFAQRGIAFAPQAVAVTGVGSHLDHVAITERWLARFPMEDWVGGRTSELSAVGLLSAALLGIDITAMLAGARQMDALTRHSDLRQNPAALLALSWYWAGNGQGKKDMVILPYKDSLLLFSRYLQQLIMESLGKERDLLGKVVHQGIAVYGNKGSTDQHAYVQQLREGIPNFFATFIEVLEDRQGPSPVVEPGITSGDYLSGLLQGTRAALYENGRESITITVPRVDAQQVGALIALYERAVGLYASLVGINAYHQPGVEAGKKAAAGVLEIQRQIVELLQQGQPLSIAAIADDLGQSEQIETIYKILRHLEANQRGVQLTGDRHNPLSLIASWQR.

The active-site Proton donor is Glu-322. Active-site residues include His-351 and Lys-455.

Belongs to the GPI family.

The protein localises to the cytoplasm. It carries out the reaction alpha-D-glucose 6-phosphate = beta-D-fructose 6-phosphate. It participates in carbohydrate biosynthesis; gluconeogenesis. It functions in the pathway carbohydrate degradation; glycolysis; D-glyceraldehyde 3-phosphate and glycerone phosphate from D-glucose: step 2/4. Its function is as follows. Catalyzes the reversible isomerization of glucose-6-phosphate to fructose-6-phosphate. The sequence is that of Glucose-6-phosphate isomerase from Synechococcus elongatus (strain ATCC 33912 / PCC 7942 / FACHB-805) (Anacystis nidulans R2).